We begin with the raw amino-acid sequence, 287 residues long: Phosphatidylglycerol--prolipoprotein diacylglyceryl transferase (287 aa).

The next 4 helical transmembrane spans lie at 15 to 35 (IGPL…ILAI), 55 to 75 (FVMF…VFFE), 90 to 110 (IWEG…TAIV), and 117 to 137 (VSFW…QAIG). Arginine 138 is a binding site for a 1,2-diacyl-sn-glycero-3-phospho-(1'-sn-glycerol). The next 2 helical transmembrane spans lie at 180 to 200 (HPTF…LLLL) and 238 to 258 (IIRT…IFII).

The protein belongs to the Lgt family.

It is found in the cell membrane. It carries out the reaction L-cysteinyl-[prolipoprotein] + a 1,2-diacyl-sn-glycero-3-phospho-(1'-sn-glycerol) = an S-1,2-diacyl-sn-glyceryl-L-cysteinyl-[prolipoprotein] + sn-glycerol 1-phosphate + H(+). It participates in protein modification; lipoprotein biosynthesis (diacylglyceryl transfer). In terms of biological role, catalyzes the transfer of the diacylglyceryl group from phosphatidylglycerol to the sulfhydryl group of the N-terminal cysteine of a prolipoprotein, the first step in the formation of mature lipoproteins. In Oceanobacillus iheyensis (strain DSM 14371 / CIP 107618 / JCM 11309 / KCTC 3954 / HTE831), this protein is Phosphatidylglycerol--prolipoprotein diacylglyceryl transferase.